We begin with the raw amino-acid sequence, 316 residues long: HTH-type transcriptional regulator PecT (316 aa).

The 58-residue stretch at 11–68 (LDLDLLRTFVAVADLNTFAAAAVAVCRTQSAVSQQMQRLEQLIGKELFARHGRNKLLT) folds into the HTH lysR-type domain. A DNA-binding region (H-T-H motif) is located at residues 28-47 (FAAAAVAVCRTQSAVSQQMQ). The interval 293-316 (LPVSTGTESELREPPTDESLKDIT) is disordered. Basic and acidic residues predominate over residues 301-316 (SELREPPTDESLKDIT).

It belongs to the LysR transcriptional regulatory family.

Regulates pectinase gene expression. This Dickeya dadantii (strain 3937) (Erwinia chrysanthemi (strain 3937)) protein is HTH-type transcriptional regulator PecT (pecT).